A 101-amino-acid chain; its full sequence is Apolipoprotein C-II (101 aa).

A signal peptide spans 1–22; the sequence is MGTRFLLALCLVLLVLGFEVQG. Residues 23 to 28 constitute a propeptide, removed in mature form; it reads AQLPQQ. The segment at 66–74 is lipid binding; it reads AVDEKLRDL. The lipoprotein lipase cofactor stretch occupies residues 78–101; sequence STAAMSTYTGIFTDQVLSVLKGEE.

It belongs to the apolipoprotein C2 family. Proapolipoprotein C-II is synthesized as a sialic acid containing glycoprotein which is subsequently desialylated prior to its proteolytic processing. Post-translationally, proapolipoprotein C-II, the major form found in plasma undergoes proteolytic cleavage of its N-terminal hexapeptide to generate apolipoprotein C-II, which occurs as the minor form in plasma.

It is found in the secreted. In terms of biological role, component of chylomicrons, very low-density lipoproteins (VLDL), low-density lipoproteins (LDL), and high-density lipoproteins (HDL) in plasma. Plays an important role in lipoprotein metabolism as an activator of lipoprotein lipase. Both proapolipoprotein C-II and apolipoprotein C-II can activate lipoprotein lipase. The sequence is that of Apolipoprotein C-II (APOC2) from Papio anubis (Olive baboon).